Reading from the N-terminus, the 129-residue chain is Sulfurtransferase TusD (129 aa).

Cysteine 79 functions as the Cysteine persulfide intermediate in the catalytic mechanism.

The protein belongs to the DsrE/TusD family. Heterohexamer, formed by a dimer of trimers. The hexameric TusBCD complex contains 2 copies each of TusB, TusC and TusD. The TusBCD complex interacts with TusE.

The protein resides in the cytoplasm. In terms of biological role, part of a sulfur-relay system required for 2-thiolation of 5-methylaminomethyl-2-thiouridine (mnm(5)s(2)U) at tRNA wobble positions. Accepts sulfur from TusA and transfers it in turn to TusE. In Pectobacterium atrosepticum (strain SCRI 1043 / ATCC BAA-672) (Erwinia carotovora subsp. atroseptica), this protein is Sulfurtransferase TusD.